Here is a 37-residue protein sequence, read N- to C-terminus: Large ribosomal subunit protein bL36 (37 aa).

Belongs to the bacterial ribosomal protein bL36 family.

The protein is Large ribosomal subunit protein bL36 of Synechococcus elongatus (strain ATCC 33912 / PCC 7942 / FACHB-805) (Anacystis nidulans R2).